Consider the following 2178-residue polypeptide: Genome polyprotein (2178 aa).

Residues 1 to 20 (MGAQVSTQKSGSHENQNILT) form a disordered region. Glycine 2 is lipidated: N-myristoyl glycine; by host. The Cytoplasmic portion of the chain corresponds to 2–1490 (GAQVSTQKSG…AVNQASMIIN (1489 aa)). Residues 564-584 (ALTEGLSDELEEVIVEKTKQT) form an amphipathic alpha-helix region. Active-site for protease 2A activity residues include histidine 875 and aspartate 893. Zn(2+)-binding residues include cysteine 910 and cysteine 912. The For protease 2A activity role is filled by cysteine 964. Residues cysteine 970 and histidine 972 each coordinate Zn(2+). The tract at residues 1100–1172 (NDGWFRKFND…HDSNPTQEKR (73 aa)) is membrane-binding. Positions 1100–1238 (NDGWFRKFND…TPGSGKSLTT (139 aa)) are oligomerization. The segment at 1121–1125 (ANKIS) is RNA-binding. In terms of domain architecture, SF3 helicase spans 1204 to 1360 (KNKITNYMQF…STYTKNGKLN (157 aa)). Zn(2+) contacts are provided by cysteine 1368, cysteine 1371, cysteine 1380, and cysteine 1385. The segment at 1368 to 1385 (CKDCHQPSNFKKCCPLVC) adopts a C4-type zinc-finger fold. The segment at 1412 to 1419 (DYKNKVKI) is RNA-binding. Residues 1423–1428 (LEVLFQ) form an oligomerization region. The stretch at 1491–1506 (TILMFVSTLGIVYVIY) is an intramembrane region. At 1507–2178 (KLFAQTQGPY…VLRRRWLDLF (672 aa)) the chain is on the cytoplasmic side. O-(5'-phospho-RNA)-tyrosine is present on tyrosine 1516. The Peptidase C3 domain occupies 1537–1714 (GPNTEFALSL…FSAQLKKQYF (178 aa)). Active-site for protease 3C activity residues include histidine 1576, glutamate 1607, and cysteine 1682. The region spanning 1946-2059 (HLMAFDYSNF…SYPFELDSNI (114 aa)) is the RdRp catalytic domain. Residues aspartate 1951 and aspartate 2045 each coordinate Mg(2+).

This sequence belongs to the picornaviruses polyprotein family. As to quaternary structure, interacts with capsid protein VP1 and capsid protein VP3 to form heterotrimeric protomers. In terms of assembly, interacts with capsid protein VP0, and capsid protein VP3 to form heterotrimeric protomers. Five protomers subsequently associate to form pentamers which serve as building blocks for the capsid. Interacts with capsid protein VP2, capsid protein VP3 and capsid protein VP4 following cleavage of capsid protein VP0. Interacts with capsid protein VP1 and capsid protein VP3 in the mature capsid. As to quaternary structure, interacts with capsid protein VP0 and capsid protein VP1 to form heterotrimeric protomers. Five protomers subsequently associate to form pentamers which serve as building blocks for the capsid. Interacts with capsid protein VP4 in the mature capsid. Interacts with protein 2C; this interaction may be important for virion morphogenesis. In terms of assembly, interacts with capsid protein VP1 and capsid protein VP3. Homodimer. As to quaternary structure, homohexamer; forms a hexameric ring structure with 6-fold symmetry characteristic of AAA+ ATPases. Interacts (via N-terminus) with host RTN3 (via reticulon domain); this interaction is important for viral replication. Interacts with capsid protein VP3; this interaction may be important for virion morphogenesis. In terms of assembly, interacts with protein 3CD. Homodimer. Interacts with host GBF1. Interacts (via GOLD domain) with host ACBD3 (via GOLD domain); this interaction allows the formation of a viral protein 3A/ACBD3 heterotetramer with a 2:2 stoichiometry, which will stimulate the recruitment of host PI4KB in order to synthesize PI4P at the viral RNA replication sites. As to quaternary structure, interacts with RNA-directed RNA polymerase. In terms of assembly, interacts with protein 3AB and with RNA-directed RNA polymerase. Interacts with Viral protein genome-linked and with protein 3CD. It depends on Mg(2+) as a cofactor. In terms of processing, specific enzymatic cleavages in vivo by the viral proteases yield processing intermediates and the mature proteins. Post-translationally, myristoylation is required for the formation of pentamers during virus assembly. Further assembly of 12 pentamers and a molecule of genomic RNA generates the provirion. During virion maturation, immature virions are rendered infectious following cleavage of VP0 into VP4 and VP2. This maturation seems to be an autocatalytic event triggered by the presence of RNA in the capsid and it is followed by a conformational change infectious virion. In terms of processing, myristoylation is required during RNA encapsidation and formation of the mature virus particle. Post-translationally, VPg is uridylylated by the polymerase into VPg-pUpU. This acts as a nucleotide-peptide primer for the genomic RNA replication.

The protein localises to the virion. The protein resides in the host cytoplasm. It localises to the host cytoplasmic vesicle membrane. It is found in the host nucleus. The catalysed reaction is a ribonucleoside 5'-triphosphate + H2O = a ribonucleoside 5'-diphosphate + phosphate + H(+). It catalyses the reaction Selective cleavage of Tyr-|-Gly bond in the picornavirus polyprotein.. The enzyme catalyses RNA(n) + a ribonucleoside 5'-triphosphate = RNA(n+1) + diphosphate. It carries out the reaction Selective cleavage of Gln-|-Gly bond in the poliovirus polyprotein. In other picornavirus reactions Glu may be substituted for Gln, and Ser or Thr for Gly.. Replication or transcription is subject to high level of random mutations by the nucleotide analog ribavirin. Its function is as follows. Forms an icosahedral capsid of pseudo T=3 symmetry with capsid proteins VP2 and VP3. The capsid is 300 Angstroms in diameter, composed of 60 copies of each capsid protein and enclosing the viral positive strand RNA genome. Capsid protein VP1 mainly forms the vertices of the capsid. Capsid protein VP1 interacts with host cell receptor to provide virion attachment to target host cells. This attachment induces virion internalization. Tyrosine kinases are probably involved in the entry process. After binding to its receptor, the capsid undergoes conformational changes. Capsid protein VP1 N-terminus (that contains an amphipathic alpha-helix) and capsid protein VP4 are externalized. Together, they shape a pore in the host membrane through which viral genome is translocated to host cell cytoplasm. In terms of biological role, forms an icosahedral capsid of pseudo T=3 symmetry with capsid proteins VP2 and VP3. The capsid is 300 Angstroms in diameter, composed of 60 copies of each capsid protein and enclosing the viral positive strand RNA genome. Lies on the inner surface of the capsid shell. After binding to the host receptor, the capsid undergoes conformational changes. Capsid protein VP4 is released, Capsid protein VP1 N-terminus is externalized, and together, they shape a pore in the host membrane through which the viral genome is translocated into the host cell cytoplasm. Functionally, component of immature procapsids, which is cleaved into capsid proteins VP4 and VP2 after maturation. Allows the capsid to remain inactive before the maturation step. Its function is as follows. Cysteine protease that cleaves viral polyprotein and specific host proteins. It is responsible for the autocatalytic cleavage between the P1 and P2 regions, which is the first cleavage occurring in the polyprotein. Also cleaves the host translation initiation factor EIF4G1, in order to shut down the capped cellular mRNA translation. Inhibits the host nucleus-cytoplasm protein and RNA trafficking by cleaving host members of the nuclear pores. Counteracts stress granule formation probably by antagonizing its assembly or promoting its dissassembly. In terms of biological role, plays an essential role in the virus replication cycle by acting as a viroporin. Creates a pore in the host endoplasmic reticulum and as a consequence releases Ca2+ in the cytoplasm of infected cell. In turn, high levels of cytoplasmic calcium may trigger membrane trafficking and transport of viral ER-associated proteins to viroplasms, sites of viral genome replication. Induces and associates with structural rearrangements of intracellular membranes. Displays RNA-binding, nucleotide binding and NTPase activities. May play a role in virion morphogenesis and viral RNA encapsidation by interacting with the capsid protein VP3. Functionally, localizes the viral replication complex to the surface of membranous vesicles. Together with protein 3CD binds the Cis-Active RNA Element (CRE) which is involved in RNA synthesis initiation. Acts as a cofactor to stimulate the activity of 3D polymerase, maybe through a nucleid acid chaperone activity. Its function is as follows. Localizes the viral replication complex to the surface of membranous vesicles. It inhibits host cell endoplasmic reticulum-to-Golgi apparatus transport and causes the disassembly of the Golgi complex, possibly through GBF1 interaction. This would result in depletion of MHC, trail receptors and IFN receptors at the host cell surface. Plays an essential role in viral RNA replication by recruiting ACBD3 and PI4KB at the viral replication sites, thereby allowing the formation of the rearranged membranous structures where viral replication takes place. In terms of biological role, acts as a primer for viral RNA replication and remains covalently bound to viral genomic RNA. VPg is uridylylated prior to priming replication into VPg-pUpU. The oriI viral genomic sequence may act as a template for this. The VPg-pUpU is then used as primer on the genomic RNA poly(A) by the RNA-dependent RNA polymerase to replicate the viral genome. During genome replication, the VPg-RNA linkage is removed by the host TDP2, thereby accelerating replication. During the late stage of the replication cycle, host TDP2 is excluded from sites of viral RNA synthesis and encapsidation, allowing for the generation of progeny virions. Involved in the viral replication complex and viral polypeptide maturation. It exhibits protease activity with a specificity and catalytic efficiency that is different from protease 3C. Protein 3CD lacks polymerase activity. Protein 3CD binds to the 5'UTR of the viral genome. Functionally, replicates the viral genomic RNA on the surface of intracellular membranes. May form linear arrays of subunits that propagate along a strong head-to-tail interaction called interface-I. Covalently attaches UMP to a tyrosine of VPg, which is used to prime RNA synthesis. The positive stranded RNA genome is first replicated at virus induced membranous vesicles, creating a dsRNA genomic replication form. This dsRNA is then used as template to synthesize positive stranded RNA genomes. ss(+)RNA genomes are either translated, replicated or encapsidated. Its function is as follows. Major viral protease that mediates proteolytic processing of the polyprotein. Cleaves host EIF5B, contributing to host translation shutoff. Also cleaves host PABPC1, contributing to host translation shutoff. Cleaves host NLRP1, triggers host N-glycine-mediated degradation of the autoinhibitory NLRP1 N-terminal fragment. The chain is Genome polyprotein from Homo sapiens (Human).